A 191-amino-acid chain; its full sequence is Shikimate kinase (191 aa).

Position 14–19 (14–19 (GSGKST)) interacts with ATP. Residue Ser-18 participates in Mg(2+) binding. Positions 36, 60, and 82 each coordinate substrate. Arg-120 is a binding site for ATP. Substrate is bound at residue Arg-147.

This sequence belongs to the shikimate kinase family. As to quaternary structure, monomer. The cofactor is Mg(2+).

Its subcellular location is the cytoplasm. It carries out the reaction shikimate + ATP = 3-phosphoshikimate + ADP + H(+). The protein operates within metabolic intermediate biosynthesis; chorismate biosynthesis; chorismate from D-erythrose 4-phosphate and phosphoenolpyruvate: step 5/7. Its function is as follows. Catalyzes the specific phosphorylation of the 3-hydroxyl group of shikimic acid using ATP as a cosubstrate. This is Shikimate kinase from Chlorobaculum tepidum (strain ATCC 49652 / DSM 12025 / NBRC 103806 / TLS) (Chlorobium tepidum).